Here is a 258-residue protein sequence, read N- to C-terminus: Protein U52 (258 aa).

It belongs to the herpesviridae UL79 family.

The protein is Protein U52 (U52) of Human herpesvirus 6A (strain Uganda-1102) (HHV-6 variant A).